The sequence spans 241 residues: Large ribosomal subunit protein uL3 (241 aa).

This sequence belongs to the universal ribosomal protein uL3 family. Part of the 50S ribosomal subunit. Forms a cluster with proteins L14 and L19.

In terms of biological role, one of the primary rRNA binding proteins, it binds directly near the 3'-end of the 23S rRNA, where it nucleates assembly of the 50S subunit. The sequence is that of Large ribosomal subunit protein uL3 from Aquifex aeolicus (strain VF5).